Here is a 2474-residue protein sequence, read N- to C-terminus: Serine/threonine-protein kinase TOR2 (2474 aa).

The interval 1–62 (MNKYINKYTT…NGPNDSGRVI (62 aa)) is disordered. Threonine 10 carries the phosphothreonine modification. Basic residues predominate over residues 25–36 (HRTRKKLTHKSH). Residues 43–56 (STTSNTDSNHNGPN) show a composition bias toward polar residues. 11 HEAT repeats span residues 588–626 (YSLTEFVRLITISYIEHEDSSVRKLAALTSCDLFIKDDI), 636–674 (HSVSEVLSKLLMIAITDPVAEIRLEILQHLGSNFDPQLA), 676–710 (PDNLRLLFMALNDEIFGIQLEAIKIIGRLSSVNPA), 756–793 (PYIDPILDVILPKCQDASSAVASTALKVLGELSVVGGK), 797–835 (RYLKELMPLIINTFQDQSNSFKRDAALTTLGQLAASSGY), 841–879 (LDYPELLGILINILKTENNPHIRRGTVRLIGILGALDPY), 917–955 (YYPTVVIHNLMKILNDPSLSIHHTAAIQAIMHIFQNLGL), 1039–1076 (RFVPETLTFFLDILENDQSNKRIVPIRILKSLVTFGPN), 1079–1116 (DYSHLIMPIVVRMTEYSAGSLKKISIITLGRLAKNINL), 1118–1155 (EMSSRIVQALVRILNNGDRELTKATMNTLSLLLLQLGT), and 1292–1331 (SYQEDLIQALCKALSSSENPPEIYQMLLNLVEFMEHDDKP). An FAT domain is found at 1338–1922 (TLGKYAQKCH…VYPLMVAIKS (585 aa)). The 325-residue stretch at 2097 to 2421 (FEPVFSVISS…EHKNAIRNAR (325 aa)) folds into the PI3K/PI4K catalytic domain. Residues 2103 to 2109 (VISSKQR) form a G-loop region. The interval 2276 to 2284 (GLGDRHPSN) is catalytic loop. An activation loop region spans residues 2296 to 2321 (HIDFGDCFEAAILREKFPEKVPFRLT). An FATC domain is found at 2442–2474 (NDLDVPEQVDKLIQQATSVENLCQHYIGWCPFW).

It belongs to the PI3/PI4-kinase family. The target of rapamycin complex 1 (TORC1) is composed of at least KOG1, LST8, TCO89 and either TOR1 (TORC1-A) or TOR2 (TORC1-B). TORC1 binds to and is inhibited by FKBP-rapamycin. Interacts with PIB2; following activation of PIB2 by glutamine. The target of rapamycin complex 2 (TORC2) is composed of at least AVO1, AVO2, BIT61, LST8, TOR2 and TSC11. TORC2 forms a homodimer. Contrary to TORC1, TORC2 does not bind to and is not sensitive to FKBP-rapamycin. Interacts with SLM1 and SLM2.

The protein resides in the cell membrane. The protein localises to the vacuole membrane. It carries out the reaction L-seryl-[protein] + ATP = O-phospho-L-seryl-[protein] + ADP + H(+). The enzyme catalyses L-threonyl-[protein] + ATP = O-phospho-L-threonyl-[protein] + ADP + H(+). It catalyses the reaction a 1,2-diacyl-sn-glycero-3-phospho-(1D-myo-inositol) + ATP = a 1,2-diacyl-sn-glycero-3-phospho-(1D-myo-inositol 4-phosphate) + ADP + H(+). In terms of biological role, phosphatidylinositol 3-kinase homolog, component of both TORC1 and TORC2. TORC1 regulates multiple cellular processes to control cell growth in response to environmental signals. Nutrient limitation and environmental stress signals cause inactivation of TORC1. Active TORC1 positively controls ribosome biogenesis via control of rRNA, ribosomal protein and tRNA gene expression, and rRNA processing. TORC1 positively controls protein biosynthesis by regulation of mRNA stability, translation initiation factor activity, and high-affinity amino acid permeases that serve to provide amino acids for use by the translation machinery. TORC1 also promotes growth by sequestering a number of nutrient and general stress-responsive transcription factors in the cytoplasm. TORC1 negatively controls macroautophagy, a process to recycle surplus cytoplasmic mass under nutrient starvation conditions. TORC1 controls many of these processes via TIP41-TAP42-mediated inhibition of the type 2A-related phosphatases PP2A and SIT4. In nutrient-rich conditions, responsible for the phosphorylation of AGC S6 kinase (S6K) YPK3, activating YPK3 kinase activity and promoting phosphorylation of ribosomal protein S6. Phosphorylates kinase SCH9 at 6 amino acids in the C-terminus, activating SCH9 kinase activity to properly regulate ribosome biogenesis, translation initiation, and entry into stationary phase. TORC2 regulates cell cycle-dependent polarization of the actin-cytoskeleton, cell wall integrity, and receptor endocytosis. TORC2 controls polarity of the actin cytoskeleton, which is required for orienting the secretory pathway toward discrete growth sites, via the RHO1/PKC1/MAPK cell integrity pathway by activating the RHO1 guanine nucleotide exchange factor ROM2. TORC2 phosphorylates the AGC kinase YPK2, an upstream effector of the cell integrity pathway. TORC2 negatively regulates calcineurin-dependent stress signaling via phosphorylation of its effector SLM1-SLM2. This chain is Serine/threonine-protein kinase TOR2 (TOR2), found in Saccharomyces cerevisiae (strain ATCC 204508 / S288c) (Baker's yeast).